The primary structure comprises 436 residues: 3-ketoacyl-CoA thiolase (436 aa).

Cysteine 99 functions as the Acyl-thioester intermediate in the catalytic mechanism. Residues histidine 392 and cysteine 422 each act as proton acceptor in the active site.

It belongs to the thiolase-like superfamily. Thiolase family. As to quaternary structure, heterotetramer of two alpha chains (FadJ) and two beta chains (FadI).

The protein resides in the cytoplasm. The enzyme catalyses an acyl-CoA + acetyl-CoA = a 3-oxoacyl-CoA + CoA. The protein operates within lipid metabolism; fatty acid beta-oxidation. Functionally, catalyzes the final step of fatty acid oxidation in which acetyl-CoA is released and the CoA ester of a fatty acid two carbons shorter is formed. This is 3-ketoacyl-CoA thiolase from Shewanella sp. (strain W3-18-1).